Consider the following 395-residue polypeptide: Formate-dependent phosphoribosylglycinamide formyltransferase (395 aa).

N(1)-(5-phospho-beta-D-ribosyl)glycinamide is bound by residues 22–23 (EL) and Glu82. ATP-binding positions include Arg115, Lys156, 161–166 (SSGKGQ), 196–199 (EGFI), and Glu204. The ATP-grasp domain occupies 120–309 (RLAAETLGLP…EFALHARAIL (190 aa)). Residues Glu268 and Glu280 each contribute to the Mg(2+) site. N(1)-(5-phospho-beta-D-ribosyl)glycinamide-binding positions include Asp287, Lys356, and 363–364 (RR).

The protein belongs to the PurK/PurT family. In terms of assembly, homodimer.

It catalyses the reaction N(1)-(5-phospho-beta-D-ribosyl)glycinamide + formate + ATP = N(2)-formyl-N(1)-(5-phospho-beta-D-ribosyl)glycinamide + ADP + phosphate + H(+). The protein operates within purine metabolism; IMP biosynthesis via de novo pathway; N(2)-formyl-N(1)-(5-phospho-D-ribosyl)glycinamide from N(1)-(5-phospho-D-ribosyl)glycinamide (formate route): step 1/1. Functionally, involved in the de novo purine biosynthesis. Catalyzes the transfer of formate to 5-phospho-ribosyl-glycinamide (GAR), producing 5-phospho-ribosyl-N-formylglycinamide (FGAR). Formate is provided by PurU via hydrolysis of 10-formyl-tetrahydrofolate. The protein is Formate-dependent phosphoribosylglycinamide formyltransferase of Stenotrophomonas maltophilia (strain R551-3).